We begin with the raw amino-acid sequence, 136 residues long: uncharacterized protein (136 aa).

Helical transmembrane passes span 10-32, 44-66, 70-89, and 102-124; these read SAGI…FIWI, LRCG…ILHF, VLLL…KTLL, and IAGV…WLLF.

The protein localises to the cell membrane. This is an uncharacterized protein from Archaeoglobus fulgidus (strain ATCC 49558 / DSM 4304 / JCM 9628 / NBRC 100126 / VC-16).